A 443-amino-acid polypeptide reads, in one-letter code: Xaa-Pro dipeptidase (443 aa).

Positions 246, 257, 339, 384, and 423 each coordinate Mn(2+).

This sequence belongs to the peptidase M24B family. Bacterial-type prolidase subfamily. Mn(2+) is required as a cofactor.

It carries out the reaction Xaa-L-Pro dipeptide + H2O = an L-alpha-amino acid + L-proline. In terms of biological role, splits dipeptides with a prolyl residue in the C-terminal position. This Escherichia fergusonii (strain ATCC 35469 / DSM 13698 / CCUG 18766 / IAM 14443 / JCM 21226 / LMG 7866 / NBRC 102419 / NCTC 12128 / CDC 0568-73) protein is Xaa-Pro dipeptidase.